The sequence spans 241 residues: MAPPRAPYIVPALKKHTATVIMAHGLGDRMSLAQNWRRRGMFDEVAFIFPNAPMIPITVNFGMTMPGWHDLTKLGRELDYESAIRHQDEPGVLRSRDYFNTLIKEQIDKGIKPSRIVLGGFSQGAAISVFTGITCKEKLGGVFGLSSYLVLSDKLKNYIPENWPNKKTPFFLAHGLEDEIVLFDFGDLSAKKMKEIGLEDVTFKSYPNLGHSADPVEIEDLARFLQKVIPPEDDGQASAGL.

Residues Ser122, Asp178, and His211 each act as charge relay system in the active site.

It belongs to the AB hydrolase superfamily. AB hydrolase 2 family.

It localises to the cytoplasm. It is found in the nucleus. It catalyses the reaction S-hexadecanoyl-L-cysteinyl-[protein] + H2O = L-cysteinyl-[protein] + hexadecanoate + H(+). In terms of biological role, hydrolyzes fatty acids from S-acylated cysteine residues in proteins with a strong preference for palmitoylated G-alpha proteins over other acyl substrates. Mediates the deacylation of G-alpha proteins such as GPA1 in vivo, but has weak or no activity toward palmitoylated Ras proteins. Has weak lysophospholipase activity in vitro; however such activity may not exist in vivo. The chain is Acyl-protein thioesterase 1 from Aspergillus fumigatus (strain ATCC MYA-4609 / CBS 101355 / FGSC A1100 / Af293) (Neosartorya fumigata).